A 444-amino-acid polypeptide reads, in one-letter code: Protein Z-dependent protease inhibitor (444 aa).

A signal peptide spans 1-21; it reads MKVVPSLLLSVLLAQVWLVPG. Residues 24–65 form a disordered region; the sequence is PSPQSPETPAPQNQTSRVVQAPKEEEEDEQEASEEKASEEEK. N-linked (GlcNAc...) asparagine glycosylation occurs at Asn36. Ser56 bears the Phosphoserine; by FAM20C mark. Residues 56-65 are compositionally biased toward basic and acidic residues; it reads SEEKASEEEK. The segment at 136–153 is heparin-binding; that stretch reads TKPGLLPSLFKGLRETLS. N-linked (GlcNAc...) asparagine glycans are attached at residues Asn180, Asn197, and Asn295.

Belongs to the serpin family. As to quaternary structure, interacts with PROZ. In terms of processing, phosphorylated by FAM20C in the extracellular medium. Expressed by the liver and secreted in plasma.

It localises to the secreted. Functionally, inhibits activity of the coagulation protease factor Xa in the presence of PROZ, calcium and phospholipids. Also inhibits factor XIa in the absence of cofactors. This is Protein Z-dependent protease inhibitor (SERPINA10) from Homo sapiens (Human).